A 364-amino-acid polypeptide reads, in one-letter code: Formate dehydrogenase (364 aa).

Positions 93 and 119 each coordinate substrate. NAD(+) contacts are provided by residues 174–175 (RI), D195, 230–234 (PLHAG), T256, D282, and 311–314 (HYSG).

The protein belongs to the D-isomer specific 2-hydroxyacid dehydrogenase family. FDH subfamily. In terms of assembly, homodimer.

Its subcellular location is the cytoplasm. It carries out the reaction formate + NAD(+) = CO2 + NADH. Cu(2+), Hg and p-chloromercuribenzoate are strong inhibitors of enzyme activity and Ca(2+), Mg(2+), Zn(2+), Mn(2+), Cd(2+) and Sn(2+) have no effect on activity indicating a cysteine residue in the protein is essential for enzyme activity or to maintain the proper structure of the enzyme. Nitrite and nitrate inhibit some enzyme activity, however cyanide, azide, thiocyanate and cyanate are strong inhibitors of the enzymatic reaction. The inhibition of cyanide is competitive with formate and reversible. In terms of biological role, catalyzes the NAD(+)-dependent oxidation of formate to carbon dioxide. Formate oxidation is the final step in the methanol oxidation pathway in methylotrophic microorganisms. Has a role in the detoxification of exogenous formate in non-methylotrophic organisms. In Candida boidinii (Yeast), this protein is Formate dehydrogenase.